The sequence spans 279 residues: Thymidylate synthase (279 aa).

Position 29 (Arg-29) interacts with dUMP. His-59 is a binding site for (6R)-5,10-methylene-5,6,7,8-tetrahydrofolate. 134-135 (RR) is a binding site for dUMP. The active-site Nucleophile is Cys-154. DUMP contacts are provided by residues 181–184 (RSAD), Asn-192, and 222–224 (HIY). Asp-184 provides a ligand contact to (6R)-5,10-methylene-5,6,7,8-tetrahydrofolate. Residue Ala-278 coordinates (6R)-5,10-methylene-5,6,7,8-tetrahydrofolate.

It belongs to the thymidylate synthase family. Bacterial-type ThyA subfamily. As to quaternary structure, homodimer.

It is found in the cytoplasm. It catalyses the reaction dUMP + (6R)-5,10-methylene-5,6,7,8-tetrahydrofolate = 7,8-dihydrofolate + dTMP. The protein operates within pyrimidine metabolism; dTTP biosynthesis. Functionally, catalyzes the reductive methylation of 2'-deoxyuridine-5'-monophosphate (dUMP) to 2'-deoxythymidine-5'-monophosphate (dTMP) while utilizing 5,10-methylenetetrahydrofolate (mTHF) as the methyl donor and reductant in the reaction, yielding dihydrofolate (DHF) as a by-product. This enzymatic reaction provides an intracellular de novo source of dTMP, an essential precursor for DNA biosynthesis. In Paracidovorax citrulli (strain AAC00-1) (Acidovorax citrulli), this protein is Thymidylate synthase.